Consider the following 233-residue polypeptide: Preflagellin peptidase (233 aa).

A topological domain (cytoplasmic) is located at residue Met-1. A helical transmembrane segment spans residues 2-18 (IAYAIGLLGLLIASIQD). Residues 19 to 23 (IKSRE) lie on the Extracellular side of the membrane. Residues 24-46 (IENYIWIGMAVIGLLLSTYLSFT) traverse the membrane as a helical segment. Topologically, residues 47-49 (TGN) are cytoplasmic. The chain crosses the membrane as a helical span at residues 50–72 (FMPIISSISGFIICFIIGYLMFV). Over 73–78 (LGIGGA) the chain is Extracellular. A helical membrane pass occupies residues 79–89 (DGKILMGMGAL). The Cytoplasmic portion of the chain corresponds to 90-110 (IPSYAFPVYSSLQPLYTMEYI). The helical transmembrane segment at 111–139 (PWFPLLVFFNGVILMIVLPIYLFFKNLSN) threads the bilayer. The Extracellular portion of the chain corresponds to 140-207 (GVKPKKLKEY…QYVWATPELP (68 aa)). A helical transmembrane segment spans residues 208-219 (LLVPIALSYIIT). At 220 to 233 (PFLGDKILSIILPM) the chain is on the cytoplasmic side.

The protein belongs to the peptidase A24 family. Archaeal preflagellin peptidase subfamily.

Its subcellular location is the cell membrane. It carries out the reaction Cleaves the signal peptide of 3 to 12 amino acids from the N-terminal of preflagellin, usually at Arg-Gly-|- or Lys-Gly-|-, to release flagellin.. In terms of biological role, cleaves the N-terminal leader peptide from preflagellins. The processing of preflagellins is necessary for assembly of flagellins into a flagellum structure. The polypeptide is Preflagellin peptidase (flaK) (Methanococcus voltae).